The primary structure comprises 338 residues: Ornithine carbamoyltransferase (338 aa).

Serine 2 carries the N-acetylserine modification. Carbamoyl phosphate contacts are provided by residues 67–70, arginine 118, histidine 145, and glutamine 148; that span reads STRT. L-ornithine-binding residues include asparagine 185, aspartate 249, serine 253, and methionine 254. The active-site Proton acceptor is cysteine 289. Carbamoyl phosphate-binding positions include 289 to 290 and arginine 316; that span reads CL.

This sequence belongs to the aspartate/ornithine carbamoyltransferase superfamily. OTCase family. In terms of assembly, interacts with CAR1.

It localises to the cytoplasm. The catalysed reaction is carbamoyl phosphate + L-ornithine = L-citrulline + phosphate + H(+). It participates in amino-acid biosynthesis; L-arginine biosynthesis; L-arginine from L-ornithine and carbamoyl phosphate: step 1/3. Its activity is regulated as follows. Forms a stable complex with CAR1 in the presence of ornithine and arginine. In this complex CAR1 retains activity, but ARG3 activity is inhibited. This is Ornithine carbamoyltransferase (ARG3) from Saccharomyces cerevisiae (strain ATCC 204508 / S288c) (Baker's yeast).